The following is a 450-amino-acid chain: UDP-N-acetylmuramoylalanine--D-glutamate ligase (450 aa).

119-125 is a binding site for ATP; it reads GSNGKTT.

The protein belongs to the MurCDEF family.

The protein resides in the cytoplasm. It carries out the reaction UDP-N-acetyl-alpha-D-muramoyl-L-alanine + D-glutamate + ATP = UDP-N-acetyl-alpha-D-muramoyl-L-alanyl-D-glutamate + ADP + phosphate + H(+). It functions in the pathway cell wall biogenesis; peptidoglycan biosynthesis. Cell wall formation. Catalyzes the addition of glutamate to the nucleotide precursor UDP-N-acetylmuramoyl-L-alanine (UMA). This Bacillus cereus (strain ATCC 14579 / DSM 31 / CCUG 7414 / JCM 2152 / NBRC 15305 / NCIMB 9373 / NCTC 2599 / NRRL B-3711) protein is UDP-N-acetylmuramoylalanine--D-glutamate ligase.